The following is a 178-amino-acid chain: Putative RING-H2 finger protein ATL19 (178 aa).

A helical transmembrane segment spans residues 11-31 (LISVLGLAVFIGLCILLVVLI). The segment at 130 to 172 (CAICLSGYVVNEECRVFPVCRHIYHALCIDAWLKNHLTCPTCR) adopts an RING-type; atypical zinc-finger fold.

The protein belongs to the RING-type zinc finger family. ATL subfamily.

The protein resides in the membrane. It carries out the reaction S-ubiquitinyl-[E2 ubiquitin-conjugating enzyme]-L-cysteine + [acceptor protein]-L-lysine = [E2 ubiquitin-conjugating enzyme]-L-cysteine + N(6)-ubiquitinyl-[acceptor protein]-L-lysine.. It functions in the pathway protein modification; protein ubiquitination. The chain is Putative RING-H2 finger protein ATL19 (ATL19) from Arabidopsis thaliana (Mouse-ear cress).